The chain runs to 424 residues: Phosphoribosylamine--glycine ligase (424 aa).

The ATP-grasp domain occupies 111 to 312 (KAFVKECGIK…LLDLFLATAK (202 aa)). ATP is bound at residue 137 to 189 (IQNASFPLVIKALNKNTSIVHHQEEALKILEDALKQSNEPVIIEPFLEGFELS).

This sequence belongs to the GARS family.

The enzyme catalyses 5-phospho-beta-D-ribosylamine + glycine + ATP = N(1)-(5-phospho-beta-D-ribosyl)glycinamide + ADP + phosphate + H(+). Its pathway is purine metabolism; IMP biosynthesis via de novo pathway; N(1)-(5-phospho-D-ribosyl)glycinamide from 5-phospho-alpha-D-ribose 1-diphosphate: step 2/2. This is Phosphoribosylamine--glycine ligase (purD) from Helicobacter pylori (strain J99 / ATCC 700824) (Campylobacter pylori J99).